Here is a 475-residue protein sequence, read N- to C-terminus: Putative aldehyde dehydrogenase (475 aa).

Residues 146–147 (WN) and 223–224 (GS) each bind NAD(+). Glutamate 245 acts as the Proton acceptor in catalysis. Position 246 (leucine 246) interacts with NAD(+). Cysteine 279 serves as the catalytic Nucleophile. Glutamate 379 lines the NAD(+) pocket.

This sequence belongs to the aldehyde dehydrogenase family.

The enzyme catalyses an aldehyde + NAD(+) + H2O = a carboxylate + NADH + 2 H(+). This is Putative aldehyde dehydrogenase from Staphylococcus aureus (strain USA300).